A 279-amino-acid polypeptide reads, in one-letter code: L-ascorbate peroxidase 5, peroxisomal (279 aa).

H39 serves as the catalytic Proton acceptor. Positions 111-134 (PFTPGRKDADSADDGELPNPNEGA) are disordered. Residue H158 participates in heme b binding. 3 residues coordinate K(+): T159, T175, and D182. Residues 251-271 (AVTQQTLGIAVAAAVVIFTIC) traverse the membrane as a helical segment. The AKR2A-binding sequence (ABS) required for peroxisome membrane targeting motif lies at 272–279 (YEASRRGK).

The protein belongs to the peroxidase family. Ascorbate peroxidase subfamily. In terms of assembly, interacts with AKR2A and AKR2B. Heme b is required as a cofactor.

The protein localises to the peroxisome membrane. The enzyme catalyses L-ascorbate + H2O2 = L-dehydroascorbate + 2 H2O. Its function is as follows. Plays a key role in hydrogen peroxide removal. The sequence is that of L-ascorbate peroxidase 5, peroxisomal (APX5) from Arabidopsis thaliana (Mouse-ear cress).